We begin with the raw amino-acid sequence, 83 residues long: MSSGGLLLLLGLLRVCAELTPVSSKDPYCNLPPDPGPCHDNKFAFYHHPASNKCKEFVYGGCGGNDNRFKTRNKCQCTCSEYP.

Positions 1–24 (MSSGGLLLLLGLLRVCAELTPVSS) are cleaved as a signal peptide. The BPTI/Kunitz inhibitor domain occupies 29–79 (CNLPPDPGPCHDNKFAFYHHPASNKCKEFVYGGCGGNDNRFKTRNKCQCTC). 3 disulfide bridges follow: C29-C79, C38-C62, and C54-C75.

This sequence belongs to the venom Kunitz-type family. Heterodimer; disulfide-linked. The A chains have phospholipase A2 activity and the B chains show homology with the basic protease inhibitors. Expressed by the venom gland.

The protein localises to the secreted. Its function is as follows. Beta-bungarotoxins are presynaptic neurotoxins of the venom. The B chain is homologous to venom basic protease inhibitors but has no protease inhibitor activity and blocks voltage-gated potassium channels (Kv). This Bungarus multicinctus (Many-banded krait) protein is Kunitz-type serine protease inhibitor homolog beta-bungarotoxin B6 chain.